The chain runs to 182 residues: Adenine phosphoribosyltransferase (182 aa).

The protein belongs to the purine/pyrimidine phosphoribosyltransferase family. Homodimer.

The protein localises to the cytoplasm. It catalyses the reaction AMP + diphosphate = 5-phospho-alpha-D-ribose 1-diphosphate + adenine. It participates in purine metabolism; AMP biosynthesis via salvage pathway; AMP from adenine: step 1/1. Its function is as follows. Catalyzes a salvage reaction resulting in the formation of AMP, that is energically less costly than de novo synthesis. This is Adenine phosphoribosyltransferase from Campylobacter jejuni subsp. jejuni serotype O:23/36 (strain 81-176).